We begin with the raw amino-acid sequence, 241 residues long: E3 ubiquitin-protein ligase RNF166 (241 aa).

The tract at residues 8-30 (VASSQHRQHHSHQSLATPSSADS) is disordered. An RING-type zinc finger spans residues 37–77 (CPICLEVYYKPVAIGSCGHTFCGECLQPCLQVSSPLCPLCR). Residues Cys102, Cys105, His117, and Cys121 each contribute to the Zn(2+) site. The segment at 102-121 (CRGCSKKVTLAKMRAHISSC) adopts a C2HC RNF-type zinc-finger fold. The UIM domain maps to 225–241 (DEEAALQAALALSLSEN).

Its subcellular location is the cytoplasm. The catalysed reaction is S-ubiquitinyl-[E2 ubiquitin-conjugating enzyme]-L-cysteine + [acceptor protein]-L-lysine = [E2 ubiquitin-conjugating enzyme]-L-cysteine + N(6)-ubiquitinyl-[acceptor protein]-L-lysine.. It participates in protein modification; protein ubiquitination. E3 ubiquitin-protein ligase that promotes the ubiquitination of different substrates. This is E3 ubiquitin-protein ligase RNF166 (rnf166) from Xenopus laevis (African clawed frog).